We begin with the raw amino-acid sequence, 205 residues long: Ras-related and estrogen-regulated growth inhibitor-like protein (205 aa).

Residues 1–205 are small GTPase-like; it reads MSNFLHLKYN…NVFGKRRKSV (205 aa). Residues 11 to 18, 58 to 64, and 123 to 126 contribute to the GTP site; these read EKSVSVTK, DPCSQTQ, and NKRD.

The protein belongs to the small GTPase superfamily. Ras family.

The enzyme catalyses GTP + H2O = GDP + phosphate + H(+). In terms of biological role, binds GDP/GTP and may possess intrinsic GTPase activity. The protein is Ras-related and estrogen-regulated growth inhibitor-like protein (RERGL) of Homo sapiens (Human).